The chain runs to 250 residues: 2,3-bisphosphoglycerate-dependent phosphoglycerate mutase (250 aa).

Substrate contacts are provided by residues 10–17 (RHGESQWN), 23–24 (TG), arginine 62, 89–92 (ERHY), lysine 100, 116–117 (RR), and 185–186 (GN). Histidine 11 serves as the catalytic Tele-phosphohistidine intermediate. The active-site Proton donor/acceptor is the glutamate 89.

Belongs to the phosphoglycerate mutase family. BPG-dependent PGAM subfamily. As to quaternary structure, homodimer.

The catalysed reaction is (2R)-2-phosphoglycerate = (2R)-3-phosphoglycerate. Its pathway is carbohydrate degradation; glycolysis; pyruvate from D-glyceraldehyde 3-phosphate: step 3/5. In terms of biological role, catalyzes the interconversion of 2-phosphoglycerate and 3-phosphoglycerate. The chain is 2,3-bisphosphoglycerate-dependent phosphoglycerate mutase from Pectobacterium carotovorum subsp. carotovorum (strain PC1).